A 183-amino-acid polypeptide reads, in one-letter code: Transmembrane protein 52B (183 aa).

Residues 1–24 form the signal peptide; sequence MGVRVHVVAASALLYFILLSGTRC. Residues 40–60 traverse the membrane as a helical segment; it reads VHLWYIWLLVVIGALLLLCGL. Residues 158–183 form a disordered region; that stretch reads DLPPVPEEKQLPPTEKESTRIVDSWN. Basic and acidic residues predominate over residues 163 to 177; the sequence is PEEKQLPPTEKESTR.

It is found in the membrane. The polypeptide is Transmembrane protein 52B (TMEM52B) (Homo sapiens (Human)).